Here is a 350-residue protein sequence, read N- to C-terminus: Dihydroorotate dehydrogenase (quinone) (350 aa).

FMN-binding positions include 67-71 and G91; that span reads AGFDK. A substrate-binding site is contributed by K71. 116–120 serves as a coordination point for substrate; the sequence is NRMGF. Residues N144 and N177 each contribute to the FMN site. N177 provides a ligand contact to substrate. S180 functions as the Nucleophile in the catalytic mechanism. Substrate is bound at residue N182. The FMN site is built by K213 and T241. 242 to 243 is a substrate binding site; it reads NT. The segment at 249-268 is disordered; the sequence is ASLHSDAADEEGGLSGAPIT. FMN is bound by residues G264, G291, and 312–313; that span reads YT.

The protein belongs to the dihydroorotate dehydrogenase family. Type 2 subfamily. As to quaternary structure, monomer. The cofactor is FMN.

The protein resides in the cell membrane. The catalysed reaction is (S)-dihydroorotate + a quinone = orotate + a quinol. The protein operates within pyrimidine metabolism; UMP biosynthesis via de novo pathway; orotate from (S)-dihydroorotate (quinone route): step 1/1. Catalyzes the conversion of dihydroorotate to orotate with quinone as electron acceptor. This chain is Dihydroorotate dehydrogenase (quinone), found in Natronomonas pharaonis (strain ATCC 35678 / DSM 2160 / CIP 103997 / JCM 8858 / NBRC 14720 / NCIMB 2260 / Gabara) (Halobacterium pharaonis).